We begin with the raw amino-acid sequence, 461 residues long: Cysteine--tRNA ligase (461 aa).

C28 lines the Zn(2+) pocket. Residues 30-40 (MTVYDYCHLGH) carry the 'HIGH' region motif. Residues C212, H237, and E241 each contribute to the Zn(2+) site. The 'KMSKS' region motif lies at 269-273 (KMSKS). Residue K272 participates in ATP binding.

Belongs to the class-I aminoacyl-tRNA synthetase family. In terms of assembly, monomer. It depends on Zn(2+) as a cofactor.

The protein resides in the cytoplasm. The catalysed reaction is tRNA(Cys) + L-cysteine + ATP = L-cysteinyl-tRNA(Cys) + AMP + diphosphate. The polypeptide is Cysteine--tRNA ligase (Aromatoleum aromaticum (strain DSM 19018 / LMG 30748 / EbN1) (Azoarcus sp. (strain EbN1))).